A 320-amino-acid polypeptide reads, in one-letter code: MVTVVDRVTDRRLRHPEKAHRPDTSVQKKPDWIRVKAPTSQVYKETHGIVRAHKLVTVCEEAGCPNIGECWSQRHASFMILGEICTRACAFCNVATGIPFAVDENEPERVADAVARMELKHVVITSVDRDDLADGGAEHFAKVIYAIRRKAPKTTIEVLTPDFRHKDGALEIVVAAKPDVFNHNLETVPSKYLKVRPGARYFHSIRLLQRVKELDPTIFTKSGIMVGLGEERNEILQLMDDLRSADVDFMTIGQYLQPTRKHHPVIRFVPPEEFESFAKIGKVKGFLHMASNPLTRSSHHAGDDFAILQKARDEKFALQR.

The interval 1 to 28 is disordered; it reads MVTVVDRVTDRRLRHPEKAHRPDTSVQK. The span at 19–28 shows a compositional bias: basic and acidic residues; the sequence is AHRPDTSVQK. Positions 59, 64, 70, 85, 89, 92, and 298 each coordinate [4Fe-4S] cluster. Positions 71 to 287 constitute a Radical SAM core domain; it reads WSQRHASFMI…AKIGKVKGFL (217 aa).

The protein belongs to the radical SAM superfamily. Lipoyl synthase family. [4Fe-4S] cluster serves as cofactor.

The protein resides in the cytoplasm. The enzyme catalyses [[Fe-S] cluster scaffold protein carrying a second [4Fe-4S](2+) cluster] + N(6)-octanoyl-L-lysyl-[protein] + 2 oxidized [2Fe-2S]-[ferredoxin] + 2 S-adenosyl-L-methionine + 4 H(+) = [[Fe-S] cluster scaffold protein] + N(6)-[(R)-dihydrolipoyl]-L-lysyl-[protein] + 4 Fe(3+) + 2 hydrogen sulfide + 2 5'-deoxyadenosine + 2 L-methionine + 2 reduced [2Fe-2S]-[ferredoxin]. Its pathway is protein modification; protein lipoylation via endogenous pathway; protein N(6)-(lipoyl)lysine from octanoyl-[acyl-carrier-protein]: step 2/2. Its function is as follows. Catalyzes the radical-mediated insertion of two sulfur atoms into the C-6 and C-8 positions of the octanoyl moiety bound to the lipoyl domains of lipoate-dependent enzymes, thereby converting the octanoylated domains into lipoylated derivatives. The sequence is that of Lipoyl synthase from Bartonella henselae (strain ATCC 49882 / DSM 28221 / CCUG 30454 / Houston 1) (Rochalimaea henselae).